The following is a 163-amino-acid chain: HTH-type transcriptional regulator IscR (163 aa).

The 130-residue stretch at 2-131 (RLTSKGRYAV…NNITLGELVN (130 aa)) folds into the HTH rrf2-type domain. Positions 28-51 (LADISERQGISLSYLEQLFSRLRK) form a DNA-binding region, H-T-H motif. Positions 92, 98, and 104 each coordinate [2Fe-2S] cluster.

[2Fe-2S] cluster serves as cofactor.

Functionally, regulates the transcription of several operons and genes involved in the biogenesis of Fe-S clusters and Fe-S-containing proteins. The sequence is that of HTH-type transcriptional regulator IscR from Klebsiella pneumoniae (strain 342).